We begin with the raw amino-acid sequence, 1378 residues long: DNA-directed RNA polymerase subunit beta (1378 aa).

This sequence belongs to the RNA polymerase beta chain family. As to quaternary structure, the RNAP catalytic core consists of 2 alpha, 1 beta, 1 beta' and 1 omega subunit. When a sigma factor is associated with the core the holoenzyme is formed, which can initiate transcription.

The catalysed reaction is RNA(n) + a ribonucleoside 5'-triphosphate = RNA(n+1) + diphosphate. Functionally, DNA-dependent RNA polymerase catalyzes the transcription of DNA into RNA using the four ribonucleoside triphosphates as substrates. The protein is DNA-directed RNA polymerase subunit beta of Campylobacter jejuni subsp. jejuni serotype O:23/36 (strain 81-176).